We begin with the raw amino-acid sequence, 296 residues long: Protoheme IX farnesyltransferase 2 (296 aa).

9 consecutive transmembrane segments (helical) span residues 7 to 27 (LLVA…GGYF), 36 to 56 (PMLL…GCVL), 83 to 103 (LKAA…LLWW), 108 to 128 (LTTA…SLWF), 134 to 154 (YGTL…YCAV), 163 to 183 (ASLL…IAIF), 207 to 227 (IHIV…CLGG), 229 to 249 (AGYG…AIAL), and 265 to 285 (FAFS…DFQV).

It belongs to the UbiA prenyltransferase family. Protoheme IX farnesyltransferase subfamily.

It localises to the cell inner membrane. The catalysed reaction is heme b + (2E,6E)-farnesyl diphosphate + H2O = Fe(II)-heme o + diphosphate. It functions in the pathway porphyrin-containing compound metabolism; heme O biosynthesis; heme O from protoheme: step 1/1. Its function is as follows. Converts heme B (protoheme IX) to heme O by substitution of the vinyl group on carbon 2 of heme B porphyrin ring with a hydroxyethyl farnesyl side group. This Pseudomonas paraeruginosa (strain DSM 24068 / PA7) (Pseudomonas aeruginosa (strain PA7)) protein is Protoheme IX farnesyltransferase 2.